Reading from the N-terminus, the 476-residue chain is Proline--tRNA ligase (476 aa).

Belongs to the class-II aminoacyl-tRNA synthetase family. ProS type 3 subfamily. In terms of assembly, homodimer.

The protein resides in the cytoplasm. The enzyme catalyses tRNA(Pro) + L-proline + ATP = L-prolyl-tRNA(Pro) + AMP + diphosphate. In terms of biological role, catalyzes the attachment of proline to tRNA(Pro) in a two-step reaction: proline is first activated by ATP to form Pro-AMP and then transferred to the acceptor end of tRNA(Pro). The chain is Proline--tRNA ligase from Rubrobacter xylanophilus (strain DSM 9941 / JCM 11954 / NBRC 16129 / PRD-1).